A 79-amino-acid chain; its full sequence is Acyl carrier protein (79 aa).

Residues 2 to 77 (SEIGERVKKI…DATKFLEKNA (76 aa)) enclose the Carrier domain. At Ser37 the chain carries O-(pantetheine 4'-phosphoryl)serine.

It belongs to the acyl carrier protein (ACP) family. Post-translationally, 4'-phosphopantetheine is transferred from CoA to a specific serine of apo-ACP by AcpS. This modification is essential for activity because fatty acids are bound in thioester linkage to the sulfhydryl of the prosthetic group.

The protein localises to the cytoplasm. It functions in the pathway lipid metabolism; fatty acid biosynthesis. Carrier of the growing fatty acid chain in fatty acid biosynthesis. This chain is Acyl carrier protein, found in Afipia carboxidovorans (strain ATCC 49405 / DSM 1227 / KCTC 32145 / OM5) (Oligotropha carboxidovorans).